Consider the following 159-residue polypeptide: NADH-quinone oxidoreductase subunit B (159 aa).

4 residues coordinate [4Fe-4S] cluster: cysteine 36, cysteine 37, cysteine 102, and cysteine 132.

The protein belongs to the complex I 20 kDa subunit family. NDH-1 is composed of 14 different subunits. Subunits NuoB, C, D, E, F, and G constitute the peripheral sector of the complex. The cofactor is [4Fe-4S] cluster.

The protein resides in the cell inner membrane. The catalysed reaction is a quinone + NADH + 5 H(+)(in) = a quinol + NAD(+) + 4 H(+)(out). Functionally, NDH-1 shuttles electrons from NADH, via FMN and iron-sulfur (Fe-S) centers, to quinones in the respiratory chain. The immediate electron acceptor for the enzyme in this species is believed to be ubiquinone. Couples the redox reaction to proton translocation (for every two electrons transferred, four hydrogen ions are translocated across the cytoplasmic membrane), and thus conserves the redox energy in a proton gradient. The protein is NADH-quinone oxidoreductase subunit B of Acidovorax ebreus (strain TPSY) (Diaphorobacter sp. (strain TPSY)).